Reading from the N-terminus, the 77-residue chain is Apidermin 2 (77 aa).

The N-terminal stretch at 1-16 (MKSLLILFAIVAVVAA) is a signal peptide.

As to expression, expressed in the epidermis, hypopharyngeal glands, fat body, trachea, esophagus and stomach.

The protein localises to the secreted. Its function is as follows. Antimicrobial peptide that binds cell wall carbohydrates of microbial symbionts and induces structural damage. Binds the cell wall carbohydrates mannan, N-acetyl-D-glucosamine and lipopolysaccharide. Can target fungi, Gram-negative and Gram-positive bacteria. This chain is Apidermin 2, found in Apis mellifera (Honeybee).